The chain runs to 1004 residues: NADH:acrylate oxidoreductase (1004 aa).

Residue threonine 455 is modified to FMN phosphoryl threonine. 7 residues coordinate FAD: alanine 508, glutamate 527, asparagine 535, threonine 536, glycine 540, glycine 541, and aspartate 775. Arginine 834 functions as the Proton donor in the catalytic mechanism. Positions 941, 970, 985, and 986 each coordinate FAD.

Belongs to the FAD-dependent oxidoreductase 2 family. FRD/SDH subfamily. It depends on FAD as a cofactor. FMN serves as cofactor. In terms of processing, is flavinylated on Thr-455 by ApbE, encoded in a neighboring gene. Flavinylation is essential for catalytic activity.

The catalysed reaction is acrylate + NADH + H(+) = propanoate + NAD(+). In terms of biological role, catalyzes the NADH-dependent reduction of acrylate to propanoate. The principal role of ARD in Vibrio seems to be the energy-saving detoxification of acrylate coming from the environment. May also use acrylate as the terminal electron acceptor for NADH regeneration at oxygen deficiency. NADPH cannot replace NADH as the electron donor. Is also able to reduce methacrylate in vitro, but with a much lower efficiency. This chain is NADH:acrylate oxidoreductase, found in Vibrio harveyi (Beneckea harveyi).